A 103-amino-acid chain; its full sequence is Small ribosomal subunit protein uS10 (103 aa).

This sequence belongs to the universal ribosomal protein uS10 family. Part of the 30S ribosomal subunit.

Its function is as follows. Involved in the binding of tRNA to the ribosomes. In Chlorobaculum tepidum (strain ATCC 49652 / DSM 12025 / NBRC 103806 / TLS) (Chlorobium tepidum), this protein is Small ribosomal subunit protein uS10.